The following is a 73-amino-acid chain: Ubiquitin-like protein 5 (73 aa).

A Ubiquitin-like domain is found at 1–73; sequence MIEITCNDRL…DGMNLELYYQ (73 aa).

The protein localises to the cytoplasm. This is Ubiquitin-like protein 5 (ubl) from Drosophila melanogaster (Fruit fly).